A 518-amino-acid polypeptide reads, in one-letter code: DNA-(apurinic or apyrimidinic site) endonuclease 2 (518 aa).

Residues N8 and E48 each coordinate Mg(2+). Y156 is a catalytic residue. The Mg(2+) site is built by D197, N199, D303, and H304. The active-site Proton donor/acceptor is the D197. The Proton acceptor role is filled by H304. The segment covering 355–405 (STLQHNNQTRVQTCQNKAQVRSTRPQPSQVGSSRGQKNLKSYFQPSPSCPQ) has biased composition (polar residues). Residues 355-407 (STLQHNNQTRVQTCQNKAQVRSTRPQPSQVGSSRGQKNLKSYFQPSPSCPQAS) are disordered. K371 is covalently cross-linked (Glycyl lysine isopeptide (Lys-Gly) (interchain with G-Cter in ubiquitin)). Positions 390–397 (QKNLKSYF) are required for the interaction and colocalization with PCNA in nuclear foci in presence of oxidative-induced DNA damaging agents. 4 residues coordinate Zn(2+): C469, H472, C495, and C509. Residues 469 to 518 (CGGHREPCVMRTVKKPGPNLGRRFYMCARPRGPPTDPSSRCNFFLWSRPS) form a GRF-type zinc finger.

This sequence belongs to the DNA repair enzymes AP/ExoA family. As to quaternary structure, interacts with PCNA; this interaction is triggered by reactive oxygen species and increased by misincorporation of uracil in nuclear DNA. Mg(2+) is required as a cofactor. Mn(2+) serves as cofactor. In terms of processing, ubiquitinated by the CUL9-RBX1 complex. Ubiquitinated by MKRN3 at Lys-371 leading to proteasomal degradation. As to expression, highly expressed in brain and kidney. Weakly expressed in the fetal brain.

Its subcellular location is the nucleus. It is found in the cytoplasm. It localises to the mitochondrion. The catalysed reaction is Exonucleolytic cleavage in the 3'- to 5'-direction to yield nucleoside 5'-phosphates.. With respect to regulation, 3'-5' exonuclease activity is activated by sodium and manganese. 3'-5' exonuclease and 3'-phosphodiesterase activities are stimulated in presence of PCNA. Functionally, functions as a weak apurinic/apyrimidinic (AP) endodeoxyribonuclease in the DNA base excision repair (BER) pathway of DNA lesions induced by oxidative and alkylating agents. Initiates repair of AP sites in DNA by catalyzing hydrolytic incision of the phosphodiester backbone immediately adjacent to the damage, generating a single-strand break with 5'-deoxyribose phosphate and 3'-hydroxyl ends. Also displays double-stranded DNA 3'-5' exonuclease, 3'-phosphodiesterase activities. Shows robust 3'-5' exonuclease activity on 3'-recessed heteroduplex DNA and is able to remove mismatched nucleotides preferentially. Also exhibits 3'-5' exonuclease activity on a single nucleotide gap containing heteroduplex DNA and on blunt-ended substrates. Shows fairly strong 3'-phosphodiesterase activity involved in the removal of 3'-damaged termini formed in DNA by oxidative agents. In the nucleus functions in the PCNA-dependent BER pathway. Plays a role in reversing blocked 3' DNA ends, problematic lesions that preclude DNA synthesis. Required for somatic hypermutation (SHM) and DNA cleavage step of class switch recombination (CSR) of immunoglobulin genes. Required for proper cell cycle progression during proliferation of peripheral lymphocytes. In Homo sapiens (Human), this protein is DNA-(apurinic or apyrimidinic site) endonuclease 2 (APEX2).